Here is a 463-residue protein sequence, read N- to C-terminus: Exodeoxyribonuclease 7 large subunit (463 aa).

Belongs to the XseA family. Heterooligomer composed of large and small subunits.

It is found in the cytoplasm. It carries out the reaction Exonucleolytic cleavage in either 5'- to 3'- or 3'- to 5'-direction to yield nucleoside 5'-phosphates.. In terms of biological role, bidirectionally degrades single-stranded DNA into large acid-insoluble oligonucleotides, which are then degraded further into small acid-soluble oligonucleotides. This is Exodeoxyribonuclease 7 large subunit from Pseudomonas syringae pv. syringae (strain B728a).